We begin with the raw amino-acid sequence, 60 residues long: Metallothionein (60 aa).

N-acetylmethionine is present on M1. A beta region spans residues 1 to 28 (MDPCECSKTGTCNCGGSCTCKNCSCTTC). A divalent metal cation-binding residues include C4, C6, C12, C14, C18, C20, C23, C25, C28, C32, C33, C35, C36, C40, C43, C47, C49, C54, C58, and C59. The segment at 29–60 (TKSCCPCCPSGCPKCASGCVCKGKTCDTTCCQ) is alpha.

This sequence belongs to the metallothionein superfamily. Type 1 family.

In terms of biological role, metallothioneins have a high content of cysteine residues that bind various heavy metals. The chain is Metallothionein (mt) from Pseudopleuronectes americanus (Winter flounder).